The primary structure comprises 633 residues: Chitinase 2 (633 aa).

The region spanning 151 to 602 (PKLSAYITDW…NAAREGLGYV (452 aa)) is the GH18 domain. Residues 275–276 (QN) and 306–309 (GGWS) each bind chitin. The active-site Proton donor is the E349. Chitin is bound by residues Y350, 422–425 (MSYD), and W582.

The protein belongs to the glycosyl hydrolase 18 family. In terms of assembly, semipurified toxin complex consists of at least YenA1-YenA2-YenB-YenC1-YenC2-Chi1-Chi2. The Yen-TC:K9 subcomplex is about 26 nm tall and 22 nm in diameter with 5-fold symmetry and 5 copies of YenA1, YenA2, Chi1 and Chi2; the chitinase subunits may be solvent accessible on the exterior the complex. The Yen-TC:K9 subcomplex has no insecticidal activity. The native complex with additional YenB, YenC1 and YenC2 subunits is 16 nm taller and is insecticidal; the toxicity-conferring subunits are present at about 1 copy each.

Its subcellular location is the secreted. It catalyses the reaction Random endo-hydrolysis of N-acetyl-beta-D-glucosaminide (1-&gt;4)-beta-linkages in chitin and chitodextrins.. With respect to regulation, toxin complex is secreted when grown at 25 degrees Celsius or less; at higher temperatures the proteins are present intracellularly but not secreted. Part of an orally active toxin complex (TC) with strong insecticidal effects on larvae of the Coleoptera Costelytra zealandica, Acrossidius tasmania and Adoryphorus couloni and some Lepidoptera larvae. The TC has an endochitinase activity. This subunit might aid infection by degradation of the larval peritrophic membrane. This is Chitinase 2 from Yersinia entomophaga.